The chain runs to 1732 residues: MPEPWGTVYFLGIAQVFSFLFSWWNLEGVMNQADAPRPLNWTIRKLCHAAFLPSVRLLKAQKSWIERAFYKRECVHIIPSTKDPHRCCCGRLIGQHVGLTPSISVLQNEKNESRLSRNDIQSEKWSISKHTQLSPTDAFGTIEFQGGGHSNKAMYVRVSFDTKPDLLLHLMTKEWQLELPKLLISVHGGLQNFELQPKLKQVFGKGLIKAAMTTGAWIFTGGVNTGVIRHVGDALKDHASKSRGKICTIGIAPWGIVENQEDLIGRDVVRPYQTMSNPMSKLTVLNSMHSHFILADNGTTGKYGAEVKLRRQLEKHISLQKINTRCLPFFSLDSRLFYSFWGSCQLDSVGIGQGVPVVALIVEGGPNVISIVLEYLRDTPPVPVVVCDGSGRASDILAFGHKYSEEGGLINESLRDQLLVTIQKTFTYTRTQAQHLFIILMECMKKKELITVFRMGSEGHQDIDLAILTALLKGANASAPDQLSLALAWNRVDIARSQIFIYGQQWPVGSLEQAMLDALVLDRVDFVKLLIENGVSMHRFLTISRLEELYNTRHGPSNTLYHLVRDVKKGNLPPDYRISLIDIGLVIEYLMGGAYRCNYTRKRFRTLYHNLFGPKRPKALKLLGMEDDIPLRRGRKTTKKREEEVDIDLDDPEINHFPFPFHELMVWAVLMKRQKMALFFWQHGEEAMAKALVACKLCKAMAHEASENDMVDDISQELNHNSRDFGQLAVELLDQSYKQDEQLAMKLLTYELKNWSNATCLQLAVAAKHRDFIAHTCSQMLLTDMWMGRLRMRKNSGLKVILGILLPPSILSLEFKNKDDMPYMSQAQEIHLQEKEAEEPEKPTKEKEEEDMELTAMLGRNNGESSRKKDEEEVQSKHRLIPLGRKIYEFYNAPIVKFWFYTLAYIGYLMLFNYIVLVKMERWPSTQEWIVISYIFTLGIEKMREILMSEPGKLLQKVKVWLQEYWNVTDLIAILLFSVGMILRLQDQPFRSDGRVIYCVNIIYWYIRLLDIFGVNKYLGPYVMMIGKMMIDMMYFVIIMLVVLMSFGVARQAILFPNEEPSWKLAKNIFYMPYWMIYGEVFADQIDPPCGQNETREDGKIIQLPPCKTGAWIVPAIMACYLLVANILLVNLLIAVFNNTFFEVKSISNQVWKFQRYQLIMTFHERPVLPPPLIIFSHMTMIFQHLCCRWRKHESDPDERDYGLKLFITDDELKKVHDFEEQCIEEYFREKDDRFNSSNDERIRVTSERVENMSMRLEEVNEREHSMKASLQTVDIRLAQLEDLIGRMATALERLTGLERAESNKIRSRTSSDCTDAAYIVRQSSFNSQEGNTFKLQESIDPAGEETMSPTSPTLMPRMRSHSFYSVNMKDKGGIEKLESIFKERSLSLHRATSSHSVAKEPKAPAAPANTLAIVPDSRRPSSCIDIYVSAMDELHCDIDPLDNSVNILGLGEPSFSTPVPSTAPSSSAYATLAPTDRPPSRSIDFEDITSMDTRSFSSDYTHLPECQNPWDSEPPMYHTIERSKSSRYLATTPFLLEEAPIVKSHSFMFSPSRSYYANFGVPVKTAEYTSITDCIDTRCVNAPQAIADRAAFPGGLGDKVEDLTCCHPEREAELSHPSSDSEENEAKGRRATIAISSQEGDNSERTLSNNITVPKIERANSYSAEEPSAPYAHTRKSFSISDKLDRQRNTASLRNPFQRSKSSKPEGRGDSLSMRRLSRTSAFQSFESKHN.

Residues 1–894 (MPEPWGTVYF…RKIYEFYNAP (894 aa)) lie on the Cytoplasmic side of the membrane. 4 calmodulin-binding regions span residues 192 to 215 (NFEL…MTTG), 300 to 323 (TGKY…QKIN), 601 to 624 (RKRF…KLLG), and 793 to 816 (RKNS…LEFK). The segment at 617–625 (PKALKLLGM) is required for the inhibitory action of G-beta/gamma-subunits of heterotrimeric G-proteins. Serine 796 is a 1,2-dioctanoyl-sn-glycero-3-phospho-(1D-myo-inositol-4,5-bisphosphate) binding site. The chain crosses the membrane as a helical span at residues 895–918 (IVKFWFYTLAYIGYLMLFNYIVLV). At 919 to 925 (KMERWPS) the chain is on the extracellular side. A helical transmembrane segment spans residues 926–948 (TQEWIVISYIFTLGIEKMREILM). Over 949–964 (SEPGKLLQKVKVWLQE) the chain is Cytoplasmic. The helical transmembrane segment at 965 to 985 (YWNVTDLIAILLFSVGMILRL) threads the bilayer. The Extracellular portion of the chain corresponds to 986 to 989 (QDQP). The helical transmembrane segment at 990–1013 (FRSDGRVIYCVNIIYWYIRLLDIF) threads the bilayer. Residues 1014 to 1028 (GVNKYLGPYVMMIGK) are Cytoplasmic-facing. Residues lysine 1017 and tyrosine 1018 each coordinate 1,2-dioctanoyl-sn-glycero-3-phospho-(1D-myo-inositol-4,5-bisphosphate). Residues 1029–1056 (MMIDMMYFVIIMLVVLMSFGVARQAILF) form a helical membrane-spanning segment. Over 1057–1111 (PNEEPSWKLAKNIFYMPYWMIYGEVFADQIDPPCGQNETREDGKIIQLPPCKTGA) the chain is Extracellular. Residues 1112–1137 (WIVPAIMACYLLVANILLVNLLIAVF) traverse the membrane as a helical segment. Topologically, residues 1138 to 1732 (NNTFFEVKSI…AFQSFESKHN (595 aa)) are cytoplasmic. Residues 1241-1301 (ERIRVTSERV…LERLTGLERA (61 aa)) adopt a coiled-coil conformation. The segment covering 1459 to 1476 (PVPSTAPSSSAYATLAPT) has biased composition (low complexity). Disordered stretches follow at residues 1459–1478 (PVPS…PTDR) and 1611–1732 (REAE…SKHN). Polar residues-rich tracts occupy residues 1635 to 1653 (AISS…NNIT), 1690 to 1701 (NTASLRNPFQRS), and 1720 to 1732 (RTSA…SKHN).

The protein belongs to the transient receptor (TC 1.A.4) family. LTrpC subfamily. TRPM3 sub-subfamily. In terms of assembly, homotetramer. Interacts with TRPM1; the interaction results in the formation of a heteromultimeric cation channel complex that are functionally different from the homomeric channels. In terms of tissue distribution, expressed primarily in the kidney and, at lower levels, in brain, testis, ovary, pancreas and spinal cord. Expression in the brain and kidney was determined at protein level. In the kidney, expressed predominantly in the collecting tubular epithelium in the medulla, medullary rays, and periglomerular regions; in the brain, highest levels are found in the cerebellum, choroid plexus, the locus coeruleus, the posterior thalamus and the substantia nigra. Down-regulated in renal tumors compared to normal kidney. Expressed in the lens.

It localises to the cell membrane. The catalysed reaction is Ca(2+)(in) = Ca(2+)(out). It catalyses the reaction Mn(2+)(in) = Mn(2+)(out). The enzyme catalyses Zn(2+)(in) = Zn(2+)(out). It carries out the reaction Mg(2+)(in) = Mg(2+)(out). Activated by the neurosteroid pregnelonone sulfate (PregS); PregS activates the channel by shifting its current-voltage activation curve toward more negative membrane potentials and also potentiates temperature-induced activation. Activated by sphingosine. Activated by heat. Intracellular Ca(2+) inhibits TRPM3 probably via interaction with Ca(2+)/calmodulin. Intracellular Mg(2+) inhibits TRPM3 activity. Both intracellular and extracellular protons block TRPM3 through propable binding sites in the pore region. Positively regulated by phosphoinositide phosphoinositol 4,5-biphosphate (PI(4,5)P2). Strongly inhibited by activation of G(i)-coupled receptors via direct binding with G-betagamma-subunits of heterotrimeric G-proteins. Its function is as follows. Constitutively active, non-selective divalent cation-conducting channel that is permeable to Ca(2+), Mn(2+), and Mg(2+), with a high permeability for Ca(2+). However, can be enhanced by increasing temperature and by ligands, including the endogenous neurosteroid pregnenolone sulfate and sphingosine-1 and suppressed by intracellular Mg(2+). Implicated in a variety of cellular processes, including insulin/peptide secretion, vascular constriction and dilation, noxious heat sensing, inflammatory and spontaneous pain sensitivity. In neurons of the dorsal root ganglia, functions as thermosensitive channel for the detection of noxious heat and spontaneous pain. Suggested to function as an ionotropic steroid receptor in beta-cell, indeed pregnenolone sulfate leads to Ca(2+) influx and enhanced insulin secretion. Mediates Zn(2+) uptake into the lumen of pancreatic beta cell secretory granules, thereby regulating insulin secretion. Forms heteromultimeric ion channels with TRPM1 which are permeable for Ca(2+) and Zn(2+) ions. Exists as multiple splice variants which differ significantly in their biophysical properties. This chain is Transient receptor potential cation channel subfamily M member 3, found in Homo sapiens (Human).